A 185-amino-acid polypeptide reads, in one-letter code: Ribosome-recycling factor (185 aa).

Belongs to the RRF family.

It is found in the cytoplasm. Responsible for the release of ribosomes from messenger RNA at the termination of protein biosynthesis. May increase the efficiency of translation by recycling ribosomes from one round of translation to another. The chain is Ribosome-recycling factor from Listeria monocytogenes serovar 1/2a (strain ATCC BAA-679 / EGD-e).